Reading from the N-terminus, the 250-residue chain is Ribosomal RNA small subunit methyltransferase J (250 aa).

S-adenosyl-L-methionine contacts are provided by residues 101–102 (RD), 117–118 (ER), 153–154 (SS), and Asp-171.

The protein belongs to the methyltransferase superfamily. RsmJ family.

The protein resides in the cytoplasm. It catalyses the reaction guanosine(1516) in 16S rRNA + S-adenosyl-L-methionine = N(2)-methylguanosine(1516) in 16S rRNA + S-adenosyl-L-homocysteine + H(+). In terms of biological role, specifically methylates the guanosine in position 1516 of 16S rRNA. The polypeptide is Ribosomal RNA small subunit methyltransferase J (Erwinia tasmaniensis (strain DSM 17950 / CFBP 7177 / CIP 109463 / NCPPB 4357 / Et1/99)).